Here is a 130-residue protein sequence, read N- to C-terminus: Protein NrdI (130 aa).

This sequence belongs to the NrdI family.

In terms of biological role, probably involved in ribonucleotide reductase function. The chain is Protein NrdI from Staphylococcus carnosus (strain TM300).